Reading from the N-terminus, the 84-residue chain is Kunitz-type serine protease inhibitor B6 (84 aa).

The N-terminal stretch at 1 to 24 (MSSGGLLLLLGLLTLWAELTPISS) is a signal peptide. The BPTI/Kunitz inhibitor domain occupies 31 to 81 (CNLAPESGRCRGHLRRIYYNLESNKCKVFFYGGCGGNANNFETRDECRQTC). 3 disulfide bridges follow: cysteine 31–cysteine 81, cysteine 40–cysteine 64, and cysteine 56–cysteine 77.

This sequence belongs to the venom Kunitz-type family. In terms of tissue distribution, expressed by the venom gland.

The protein localises to the secreted. Functionally, serine protease inhibitor that inhibits trypsin. The polypeptide is Kunitz-type serine protease inhibitor B6 (Daboia siamensis (Eastern Russel's viper)).